The sequence spans 364 residues: Nucleoporin SEH1 (364 aa).

WD repeat units follow at residues 10–49 (DHKDLIHDVSYDFHGRRMATCSSDQSVKVWDKGDDGEWHC), 55–96 (THSG…SNDK), 111–152 (DSRT…NLSQ), 160–210 (SCKL…RKYA), 217–258 (TVTD…RESA), and 276–315 (SHNSQVWRVSWNITSTLLASSGDDGCVRLWKANYMDNWKC).

This sequence belongs to the WD repeat SEC13 family. As to quaternary structure, component of the Nup107-160 subcomplex of the nuclear pore complex (NPC). The Nup107-160 subcomplex includes NUP160, NUP133, NUP107, NUP98, NUP85, NUP43, NUP37, SEH1 and SEC13. Component of the GATOR2 subcomplex, composed of MIOS, SEC13, SEH1L, WDR24 and WDR59. The GATOR2 complex interacts with CASTOR1 and CASTOR2; the interaction is negatively regulated by arginine. The GATOR2 complex interacts with SESN1, SESN2 and SESN3; the interaction is negatively regulated by amino acids.

It localises to the chromosome. It is found in the centromere. Its subcellular location is the kinetochore. The protein localises to the nucleus. The protein resides in the nuclear pore complex. It localises to the lysosome membrane. The GATOR2 complex is negatively regulated by the upstream amino acid sensors CASTOR1 and SESN2, which sequester the GATOR2 complex in absence of amino acids. In the presence of abundant amino acids, GATOR2 is released from CASTOR1 and SESN2 and activated. Functionally, component of the Nup107-160 subcomplex of the nuclear pore complex (NPC). The Nup107-160 subcomplex is required for the assembly of a functional NPC. The Nup107-160 subcomplex is also required for normal kinetochore microtubule attachment, mitotic progression and chromosome segregation. This subunit plays a role in recruitment of the Nup107-160 subcomplex to the kinetochore. In terms of biological role, as a component of the GATOR2 complex, functions as an activator of the amino acid-sensing branch of the mTORC1 signaling pathway. The GATOR2 complex indirectly activates mTORC1 through the inhibition of the GATOR1 subcomplex. GATOR2 probably acts as an E3 ubiquitin-protein ligase toward GATOR1. In the presence of abundant amino acids, the GATOR2 complex mediates ubiquitination of the NPRL2 core component of the GATOR1 complex, leading to GATOR1 inactivation. In the absence of amino acids, GATOR2 is inhibited, activating the GATOR1 complex. This is Nucleoporin SEH1 (seh1l) from Danio rerio (Zebrafish).